Reading from the N-terminus, the 183-residue chain is Nucleoside triphosphate pyrophosphatase (183 aa).

Asp-71 acts as the Proton acceptor in catalysis.

The protein belongs to the Maf family. A divalent metal cation serves as cofactor.

Its subcellular location is the cytoplasm. It catalyses the reaction a ribonucleoside 5'-triphosphate + H2O = a ribonucleoside 5'-phosphate + diphosphate + H(+). The enzyme catalyses a 2'-deoxyribonucleoside 5'-triphosphate + H2O = a 2'-deoxyribonucleoside 5'-phosphate + diphosphate + H(+). Its function is as follows. Nucleoside triphosphate pyrophosphatase. May have a dual role in cell division arrest and in preventing the incorporation of modified nucleotides into cellular nucleic acids. This chain is Nucleoside triphosphate pyrophosphatase, found in Campylobacter jejuni subsp. jejuni serotype O:2 (strain ATCC 700819 / NCTC 11168).